Consider the following 956-residue polypeptide: Bromodomain testis-specific protein (956 aa).

Residues 26 to 132 (RLTNQLQFLQ…KLFMQKLSQM (107 aa)) enclose the Bromo 1 domain. A Phosphoserine modification is found at Ser186. A Nuclear localization signal motif is present at residues 208–219 (KGVKRRADTTTP). The interval 210 to 239 (VKRRADTTTPTTSIAKASSESPPTLRETKP) is disordered. Residues 216–231 (TTTPTTSIAKASSESP) show a composition bias toward polar residues. Residues 266 to 375 (VKVTEQLKHC…DVFELHFAKI (110 aa)) form the Bromo 2 domain. Disordered regions lie at residues 391 to 420 (NSAQ…ERVQ), 442 to 508 (VPLR…PMNY), 607 to 747 (NQLN…HSQQ), and 859 to 934 (LEHN…RREA). The segment covering 392–409 (SAQALSRESSSEASSGDA) has biased composition (low complexity). Residues 417 to 442 (ERVQHLAKLQEQLNAVHQQLQVLSQV) are a coiled coil. Residues 445-463 (RKLKKKNEKSKRAPKRKKV) are compositionally biased toward basic residues. One can recognise an NET domain in the interval 496 to 578 (KSEEEDNAKP…ACLRKRSLKP (83 aa)). Residues 625 to 640 (PPPPPPPPPPPPPPPE) are compositionally biased toward pro residues. Low complexity predominate over residues 649 to 688 (DSSSSSGSGSGSSSSSSGSSSSSSSSGSASSSSDSSSSDS). The segment covering 714–724 (KQIQSSVQDIT) has biased composition (polar residues). Residues 844–940 (EKEVKARTQE…RREAMAGTID (97 aa)) adopt a coiled-coil conformation. 2 stretches are compositionally biased toward basic and acidic residues: residues 859-874 (LEHN…ENQR) and 915-934 (LLKD…RREA).

It belongs to the BET family. Interacts with SMARCE1. Interacts with mRNA splicing machinery proteins SRSF2, DDX5, HNRNPK and TARDBP. Interacts with the acetylated N-terminus of histone H1, H2, H3 and H4. Interacts with P-TEFb components CDK9 and CCNT1/cyclin-T1. Ubiquitinated in a SPOP-dependent manner, leading to proteasomal degradation. In terms of tissue distribution, testis-specific. Expressed in germinal cells from the early meiotic (pachytene) spermatocytes and during spermiogenesis in the round and elongating spermatids until the condensed late spermatids. No expression seen in spermatogonia.

It is found in the nucleus. In terms of biological role, testis-specific chromatin protein that specifically binds histone H4 acetylated at 'Lys-5' and 'Lys-8' (H4K5ac and H4K8ac, respectively) and plays a key role in spermatogenesis. Required in late pachytene spermatocytes: plays a role in meiotic and post-meiotic cells by binding to acetylated histones at the promoter of specific meiotic and post-meiotic genes, facilitating their activation at the appropriate time. In the post-meiotic phase of spermatogenesis, binds to hyperacetylated histones and participates in their general removal from DNA. Also recognizes and binds a subset of butyrylated histones: able to bind histone H4 butyrylated at 'Lys-8' (H4K8ac), while it is not able to bind H4 butyrylated at 'Lys-5' (H4K5ac). Also acts as a component of the splicing machinery in pachytene spermatocytes and round spermatids and participates in 3'-UTR truncation of specific mRNAs in post-meiotic spermatids. Required for chromocenter organization, a structure comprised of peri-centromeric heterochromatin. This is Bromodomain testis-specific protein (Brdt) from Mus musculus (Mouse).